A 210-amino-acid chain; its full sequence is Orotate phosphoribosyltransferase (210 aa).

Residues Arg96, Lys100, His102, and 122-130 (EDLISTGGS) contribute to the 5-phospho-alpha-D-ribose 1-diphosphate site. Residue Ser126 participates in orotate binding.

The protein belongs to the purine/pyrimidine phosphoribosyltransferase family. PyrE subfamily. Homodimer. Mg(2+) is required as a cofactor.

The enzyme catalyses orotidine 5'-phosphate + diphosphate = orotate + 5-phospho-alpha-D-ribose 1-diphosphate. It participates in pyrimidine metabolism; UMP biosynthesis via de novo pathway; UMP from orotate: step 1/2. Catalyzes the transfer of a ribosyl phosphate group from 5-phosphoribose 1-diphosphate to orotate, leading to the formation of orotidine monophosphate (OMP). This is Orotate phosphoribosyltransferase from Streptococcus pneumoniae (strain ATCC BAA-255 / R6).